Consider the following 20-residue polypeptide: Lysozyme (20 aa).

In terms of assembly, monomer.

Its subcellular location is the secreted. The enzyme catalyses Hydrolysis of (1-&gt;4)-beta-linkages between N-acetylmuramic acid and N-acetyl-D-glucosamine residues in a peptidoglycan and between N-acetyl-D-glucosamine residues in chitodextrins.. Has bacteriolytic activity. The protein is Lysozyme of Lysobacter sp. (strain XL1).